Consider the following 468-residue polypeptide: Dihydrolipoyl dehydrogenase (468 aa).

FAD is bound by residues 39–47 (EKGNLGGVC), K56, and A119. C47 and C52 are oxidised to a cystine. Residues 183-187 (GGGYI), E206, and 271-274 (TVGR) contribute to the NAD(+) site. FAD contacts are provided by D314 and A322. H446 (proton acceptor) is an active-site residue.

It belongs to the class-I pyridine nucleotide-disulfide oxidoreductase family. Homodimer. FAD serves as cofactor.

The protein localises to the cytoplasm. The protein resides in the membrane. It catalyses the reaction N(6)-[(R)-dihydrolipoyl]-L-lysyl-[protein] + NAD(+) = N(6)-[(R)-lipoyl]-L-lysyl-[protein] + NADH + H(+). Its function is as follows. Lipoamide dehydrogenase is a component of the alpha-ketoacid dehydrogenase complexes. This Staphylococcus aureus (strain COL) protein is Dihydrolipoyl dehydrogenase (pdhD).